Reading from the N-terminus, the 478-residue chain is Abscisate beta-glucosyltransferase (478 aa).

Histidine 20 functions as the Proton acceptor in the catalytic mechanism. An anthocyanidin is bound at residue histidine 20. The active-site Charge relay is the aspartate 108. UDP-alpha-D-glucose contacts are provided by alanine 340, glutamine 342, histidine 357, tryptophan 360, asparagine 361, serine 362, and glutamate 365. Alanine 380 provides a ligand contact to an anthocyanidin. UDP-alpha-D-glucose-binding residues include glutamate 381 and glutamine 382.

Belongs to the UDP-glycosyltransferase family.

It catalyses the reaction 2-cis-(+)-abscisate + UDP-alpha-D-glucose = beta-D-glucopyranosyl cis-(+)-abscisate + UDP. Glucosyltransferase involved in the catabolism of abscisic acid (ABA). Adds a glucosyl group at the C-1 position of ABA; (S)-2-trans-abscisate is a better substrate than the natural (+)-S-abscisate or its enantiomer (-)-R-abscisate. No activity with (-)-phaseic acid (PA), methylated-ABA or with other hormones such as jasmonate, zeatin, auxin (IAA) or gibberellin A3 (GA3). This Phaseolus angularis (Azuki bean) protein is Abscisate beta-glucosyltransferase (AOG).